The following is a 571-amino-acid chain: WAP, Kazal, immunoglobulin, Kunitz and NTR domain-containing protein 2 (571 aa).

An N-terminal signal peptide occupies residues 1 to 29 (MCAPGYHRFWFHWGLLLLLLLEAPLRGLA). Residues 34 to 87 (RYSHAGICPNDMNPNLWVDAQSTCKRECETDQECETYEKCCPNVCGTKSCVAAR) form the WAP domain. Cystine bridges form between C41–C74, C57–C78, C61–C73, C67–C83, C129–C159, C133–C152, C141–C170, and C226–C282. The Kazal-like domain maps to 121–172 (WDGQPVCKCKDRCEKEPSFTCASDGLTYYNRCFMDAEACSKGITLSVVTCRY). The Ig-like C2-type domain maps to 205-298 (PALLNHPVHQ…GVLRADFPLS (94 aa)). N-linked (GlcNAc...) asparagine glycosylation occurs at N314. 9 disulfides stabilise this stretch: C323–C373, C332–C356, C348–C369, C381–C431, C390–C414, C406–C427, C440–C510, C443–C512, and C454–C561. 2 consecutive BPTI/Kunitz inhibitor domains span residues 323 to 373 (CLKP…MLAC) and 381 to 431 (CSLP…EESC). Residues 440–561 (CRACKPRQKL…LREVMYKKTC (122 aa)) enclose the NTR domain. The N-linked (GlcNAc...) asparagine glycan is linked to N514.

This sequence belongs to the WFIKKN family. Interacts with both mature and propeptide myostatin/MSTN. As to expression, widely expressed, with high expression in skeletal muscle and heart. Also expressed in brain, lung and testis. Weakly expressed in liver and kidney.

The protein resides in the secreted. In terms of biological role, protease-inhibitor that contains multiple distinct protease inhibitor domains. Probably has serine protease- and metalloprotease-inhibitor activity. Inhibits the biological activity of mature myostatin, but not activin. In Mus musculus (Mouse), this protein is WAP, Kazal, immunoglobulin, Kunitz and NTR domain-containing protein 2 (Wfikkn2).